Consider the following 425-residue polypeptide: Dihydroorotase (425 aa).

2 residues coordinate Zn(2+): H56 and H58. Substrate-binding positions include H58–R60 and N90. Residues D148, H175, and H228 each coordinate Zn(2+). N274 provides a ligand contact to substrate. D301 provides a ligand contact to Zn(2+). D301 is an active-site residue. Substrate contacts are provided by residues H305 and F319–G320.

It belongs to the metallo-dependent hydrolases superfamily. DHOase family. Class I DHOase subfamily. Zn(2+) is required as a cofactor.

It catalyses the reaction (S)-dihydroorotate + H2O = N-carbamoyl-L-aspartate + H(+). It participates in pyrimidine metabolism; UMP biosynthesis via de novo pathway; (S)-dihydroorotate from bicarbonate: step 3/3. Functionally, catalyzes the reversible cyclization of carbamoyl aspartate to dihydroorotate. This Lactobacillus gasseri (strain ATCC 33323 / DSM 20243 / BCRC 14619 / CIP 102991 / JCM 1131 / KCTC 3163 / NCIMB 11718 / NCTC 13722 / AM63) protein is Dihydroorotase.